A 373-amino-acid polypeptide reads, in one-letter code: D-alanine--D-alanine ligase (373 aa).

Positions 156 to 363 (KKLLAADGLP…YPTLLATMIE (208 aa)) constitute an ATP-grasp domain. Residue 184–239 (CERLGLPVFVKPARGGSSIGVSRVSSWDQLPAAVARARRHDPKVIVEAAISGRELE) participates in ATP binding. D318, E330, and N332 together coordinate Mg(2+).

Belongs to the D-alanine--D-alanine ligase family. Mg(2+) is required as a cofactor. It depends on Mn(2+) as a cofactor.

The protein resides in the cytoplasm. It carries out the reaction 2 D-alanine + ATP = D-alanyl-D-alanine + ADP + phosphate + H(+). It functions in the pathway cell wall biogenesis; peptidoglycan biosynthesis. Cell wall formation. In Mycobacterium tuberculosis (strain ATCC 25177 / H37Ra), this protein is D-alanine--D-alanine ligase.